Reading from the N-terminus, the 344-residue chain is AA9 family lytic polysaccharide monooxygenase cel61A (344 aa).

Positions 1–21 are cleaved as a signal peptide; the sequence is MIQKLSNLLVTALAVATGVVG. Position 22 (H22) interacts with Cu(2+). 2 cysteine pairs are disulfide-bonded: C77/C198 and C118/C122. A glycan (N-linked (GlcNAc...) asparagine) is linked at N80. Cu(2+) is bound at residue H107. A glycan (N-linked (GlcNAc...) asparagine) is linked at N158. The O2 site is built by H184 and Q193. Residue Y195 coordinates Cu(2+). A disordered region spans residues 262-310; that stretch reads ATASATVPGGGSGPTSRTTTTARTTQASSRPSSTPPATTSAPAGGPTQT. The segment covering 275 to 310 has biased composition (low complexity); it reads PTSRTTTTARTTQASSRPSSTPPATTSAPAGGPTQT. Positions 307–343 constitute a CBM1 domain; it reads PTQTLYGQCGGSGYSGPTRCAPPATCSTLNPYYAQCL.

This sequence belongs to the polysaccharide monooxygenase AA9 family. It depends on Cu(2+) as a cofactor.

The protein localises to the secreted. The enzyme catalyses [(1-&gt;4)-beta-D-glucosyl]n+m + reduced acceptor + O2 = 4-dehydro-beta-D-glucosyl-[(1-&gt;4)-beta-D-glucosyl]n-1 + [(1-&gt;4)-beta-D-glucosyl]m + acceptor + H2O.. Lytic polysaccharide monooxygenase (LPMO) that depolymerizes crystalline and amorphous polysaccharides via the oxidation of scissile alpha- or beta-(1-4)-glycosidic bonds, yielding C1 or C4 oxidation products. Catalysis by LPMOs requires the reduction of the active-site copper from Cu(II) to Cu(I) by a reducing agent and H(2)O(2) or O(2) as a cosubstrate. Shows activity on beta-glucan and amorphous cellulose. Does not show beta-1-3-glucanase, beta-1,6-glucanase, mannanase, xylanase, beta-1,3-galactosidase, amylase, pectinase, nor chitinase activities. The protein is AA9 family lytic polysaccharide monooxygenase cel61A of Hypocrea jecorina (Trichoderma reesei).